The chain runs to 165 residues: Nucleotide-binding protein P9515_05441 (165 aa).

The protein belongs to the YajQ family.

Nucleotide-binding protein. In Prochlorococcus marinus (strain MIT 9515), this protein is Nucleotide-binding protein P9515_05441.